We begin with the raw amino-acid sequence, 894 residues long: Valine--tRNA ligase (894 aa).

The span at 1-22 (MKSIQTPSKSHTNTKETPVMSQ) shows a compositional bias: polar residues. The interval 1–28 (MKSIQTPSKSHTNTKETPVMSQEETKGY) is disordered. Residues 69–79 (PNVTGSLHIGH) carry the 'HIGH' region motif. The 'KMSKS' region signature appears at 554–558 (KMSKS). Position 557 (Lys557) interacts with ATP. A coiled-coil region spans residues 832-894 (IISRLEKQQE…VKVELQGIKG (63 aa)).

The protein belongs to the class-I aminoacyl-tRNA synthetase family. ValS type 1 subfamily. Monomer.

It localises to the cytoplasm. The catalysed reaction is tRNA(Val) + L-valine + ATP = L-valyl-tRNA(Val) + AMP + diphosphate. Catalyzes the attachment of valine to tRNA(Val). As ValRS can inadvertently accommodate and process structurally similar amino acids such as threonine, to avoid such errors, it has a 'posttransfer' editing activity that hydrolyzes mischarged Thr-tRNA(Val) in a tRNA-dependent manner. In Wolinella succinogenes (strain ATCC 29543 / DSM 1740 / CCUG 13145 / JCM 31913 / LMG 7466 / NCTC 11488 / FDC 602W) (Vibrio succinogenes), this protein is Valine--tRNA ligase.